Here is a 91-residue protein sequence, read N- to C-terminus: CRISPR-associated endoribonuclease Cas2 2 (91 aa).

Mg(2+) is bound at residue Asp10.

The protein belongs to the CRISPR-associated endoribonuclease Cas2 protein family. In terms of assembly, homodimer, forms a heterotetramer with a Cas1 homodimer. It depends on Mg(2+) as a cofactor.

Its function is as follows. CRISPR (clustered regularly interspaced short palindromic repeat), is an adaptive immune system that provides protection against mobile genetic elements (viruses, transposable elements and conjugative plasmids). CRISPR clusters contain sequences complementary to antecedent mobile elements and target invading nucleic acids. CRISPR clusters are transcribed and processed into CRISPR RNA (crRNA). Functions as a ssRNA-specific endoribonuclease. Involved in the integration of spacer DNA into the CRISPR cassette. The chain is CRISPR-associated endoribonuclease Cas2 2 from Thermodesulfovibrio yellowstonii (strain ATCC 51303 / DSM 11347 / YP87).